The primary structure comprises 327 residues: Probable cell division protein WhiA (327 aa).

The segment at residues Ser275 to Glu308 is a DNA-binding region (H-T-H motif).

Belongs to the WhiA family.

Its function is as follows. Involved in cell division and chromosome segregation. In Corynebacterium glutamicum (strain ATCC 13032 / DSM 20300 / JCM 1318 / BCRC 11384 / CCUG 27702 / LMG 3730 / NBRC 12168 / NCIMB 10025 / NRRL B-2784 / 534), this protein is Probable cell division protein WhiA.